The chain runs to 1068 residues: Rho family-interacting cell polarization regulator 2 (1068 aa).

Ser-21 and Ser-37 each carry phosphoserine; in isoform. The interval 45–73 (LKKPQAKLKKMHNLGHKNNNPPKEPQPKR) is disordered. Basic residues predominate over residues 48-59 (PQAKLKKMHNLG). The segment at 55-113 (MHNLGHKNNNPPKEPQPKRVEEVYRALKNGLDEYLEVHQTELDKLTAQLKDMKRNSRLG) is involved in cell filopodia formation. The stretch at 83–112 (NGLDEYLEVHQTELDKLTAQLKDMKRNSRL) forms a coiled coil. At Ser-341 the chain carries Phosphoserine; in isoform 2. The span at 474–491 (QNEGMDDTSSASSRNSLG) shows a compositional bias: polar residues. The disordered stretch occupies residues 474–524 (QNEGMDDTSSASSRNSLGEGQEPKSHLKEEDPEEPRKPASAPSEACRRQSS). Basic and acidic residues predominate over residues 494-510 (QEPKSHLKEEDPEEPRK). Phosphoserine; in isoform 2 is present on Ser-523. Ser-573 bears the Phosphoserine mark. The residue at position 585 (Ser-585) is a Phosphoserine; in isoform 2. Positions 768-793 (VARSLLEKLSRQIQVMEKLAAVSDEN) form a coiled coil.

This sequence belongs to the RIPOR family. In terms of assembly, homooligomer; homooligomerization is regulated by RHOC and leads to the formation of concatemers through the association of N- and C-termini. Interacts with 14-3-3 proteins; these interactions occur during myogenic cell differentiation. Interacts with HDAC6; this interaction occurs during early myogenic differentiation and prevents HDAC6 to deacetylate tubulin. Interacts with DYSF; this interaction occurs during early myogenic differentiation. Interacts with MYOF. Interacts with RHOC. Isoform 1 and isoform 2 interact (via active GTP- or inactive GDP-bound forms) with RHOA; these interactions are direct, block the loading of GTP to RHOA and decrease upon chemokine CCL19 stimulation in primary T lymphocytes. Isoform 2 interacts (phosphorylated form) with HDAC6; this interaction induces T cell proliferation arrest. Isoform 2 interacts (phosphorylated form) with 14-3-3 proteins; these interactions induces T cell proliferation arrest. Isoform 2 interacts with 14-3-3 proteins. Isoform 2 interacts (via phosphorylated form) with YWHAB; this interaction occurs in a chemokine-dependent manner and does not compete for binding of RIPOR2 with RHOA nor blocks inhibition of RIPOR2-mediated RHOA activity. Isoform 2 interacts with YWHAE. Isoform 2 interacts with YWHAQ. In terms of processing, phosphorylated. Isoform 2 is phosphorylated in T cells. Chemokine-induced phosphorylation of isoform 2 in neutrophils occurs in a PKC- and AKT-dependent manner, resulting in RIPOR2 interaction with YWHAB and stabilization. Isoform 2 is phosphorylated by PKCA, AKT1 and MAPKAPK1A; in vitro. Post-translationally, acetylated during myogenic differentiation. In terms of tissue distribution, expressed in primary fetal mononuclear myoblast. Expressed strongly in naive T lymphocytes. Expressed weakly in activated T lymphocytes (at protein level). Expressed in blood cells and adult tissues of hematopoietic origin, such as the secondary lymphoid organs. Expressed in cytotrophoblast.

The protein localises to the cytoplasm. It localises to the cytoskeleton. The protein resides in the cell projection. It is found in the filopodium. Its subcellular location is the stereocilium. The protein localises to the stereocilium membrane. It localises to the apical cell membrane. Its function is as follows. Acts as an inhibitor of the small GTPase RHOA and plays several roles in the regulation of myoblast and hair cell differentiation, lymphocyte T proliferation and neutrophil polarization. Inhibits chemokine-induced T lymphocyte responses, such as cell adhesion, polarization and migration. Involved also in the regulation of neutrophil polarization, chemotaxis and adhesion. Required for normal development of inner and outer hair cell stereocilia within the cochlea of the inner ear. Plays a role for maintaining the structural organization of the basal domain of stereocilia. Involved in mechanosensory hair cell function. Required for normal hearing. Acts as an inhibitor of the small GTPase RHOA. Plays a role in fetal mononuclear myoblast differentiation by promoting filopodia and myotube formation. Maintains naive T lymphocytes in a quiescent state. This chain is Rho family-interacting cell polarization regulator 2 (RIPOR2), found in Homo sapiens (Human).